The primary structure comprises 466 residues: Ras-GEF domain-containing family member 1C (466 aa).

The segment at 1–37 (MPQTLSASDMVTPGSLSPPPTEPTDGEQAGQPLLDGA) is disordered. One can recognise an N-terminal Ras-GEF domain in the interval 34 to 164 (LDGAPSSASL…LLQALHQKLA (131 aa)). Residues 200–446 (DPYTLAQQLT…YLASYESESP (247 aa)) form the Ras-GEF domain.

In terms of biological role, guanine nucleotide exchange factor (GEF). This chain is Ras-GEF domain-containing family member 1C (RASGEF1C), found in Homo sapiens (Human).